The chain runs to 562 residues: Arf-GAP domain and FG repeat-containing protein 1 (562 aa).

Residues 11–135 (EKHLKMLRDM…WYVPPEQAKV (125 aa)) enclose the Arf-GAP domain. A C4-type zinc finger spans residues 29–52 (CFDCDQRGPTYVNMTVGSFVCTSC). Ser167 carries the post-translational modification Phosphoserine. The segment at 168–194 (APALHLNKGTPSQSPVVGRSQAQQQEK) is disordered. Residues 176–191 (GTPSQSPVVGRSQAQQ) show a composition bias toward polar residues. Phosphothreonine is present on Thr177. Residues Ser181 and Ser362 each carry the phosphoserine modification. Ser367 carries O-linked (GlcNAc) serine glycosylation.

As to quaternary structure, interacts with EPS15R and EPS15. Interacts with FCHO1. In terms of processing, O-glycosylated.

Its subcellular location is the nucleus. The protein resides in the cytoplasmic vesicle. Its function is as follows. Required for vesicle docking or fusion during acrosome biogenesis. May play a role in RNA trafficking or localization. This chain is Arf-GAP domain and FG repeat-containing protein 1 (AGFG1), found in Bos taurus (Bovine).